A 232-amino-acid polypeptide reads, in one-letter code: Large ribosomal subunit protein uL1 (232 aa).

It belongs to the universal ribosomal protein uL1 family. As to quaternary structure, part of the 50S ribosomal subunit.

Its function is as follows. Binds directly to 23S rRNA. The L1 stalk is quite mobile in the ribosome, and is involved in E site tRNA release. In terms of biological role, protein L1 is also a translational repressor protein, it controls the translation of the L11 operon by binding to its mRNA. The sequence is that of Large ribosomal subunit protein uL1 from Xylella fastidiosa (strain M12).